A 318-amino-acid polypeptide reads, in one-letter code: Homoserine kinase (318 aa).

Residue 97–107 participates in ATP binding; it reads PIGSGLGSSAC.

The protein belongs to the GHMP kinase family. Homoserine kinase subfamily.

The protein resides in the cytoplasm. It carries out the reaction L-homoserine + ATP = O-phospho-L-homoserine + ADP + H(+). The protein operates within amino-acid biosynthesis; L-threonine biosynthesis; L-threonine from L-aspartate: step 4/5. Its function is as follows. Catalyzes the ATP-dependent phosphorylation of L-homoserine to L-homoserine phosphate. In Vibrio atlanticus (strain LGP32) (Vibrio splendidus (strain Mel32)), this protein is Homoserine kinase.